The chain runs to 416 residues: 4-hydroxy-3-methylbut-2-en-1-yl diphosphate synthase (flavodoxin) (416 aa).

Residues cysteine 304, cysteine 307, cysteine 350, and glutamate 357 each contribute to the [4Fe-4S] cluster site.

Belongs to the IspG family. It depends on [4Fe-4S] cluster as a cofactor.

It carries out the reaction (2E)-4-hydroxy-3-methylbut-2-enyl diphosphate + oxidized [flavodoxin] + H2O + 2 H(+) = 2-C-methyl-D-erythritol 2,4-cyclic diphosphate + reduced [flavodoxin]. The protein operates within isoprenoid biosynthesis; isopentenyl diphosphate biosynthesis via DXP pathway; isopentenyl diphosphate from 1-deoxy-D-xylulose 5-phosphate: step 5/6. Converts 2C-methyl-D-erythritol 2,4-cyclodiphosphate (ME-2,4cPP) into 1-hydroxy-2-methyl-2-(E)-butenyl 4-diphosphate. The protein is 4-hydroxy-3-methylbut-2-en-1-yl diphosphate synthase (flavodoxin) of Allorhizobium ampelinum (strain ATCC BAA-846 / DSM 112012 / S4) (Agrobacterium vitis (strain S4)).